The following is a 165-amino-acid chain: Cyclic pyranopterin monophosphate synthase (165 aa).

Residues Phe-83 to His-85 and Met-120 to Glu-121 each bind substrate. Asp-135 is a catalytic residue.

The protein belongs to the MoaC family. As to quaternary structure, homohexamer; trimer of dimers.

The enzyme catalyses (8S)-3',8-cyclo-7,8-dihydroguanosine 5'-triphosphate = cyclic pyranopterin phosphate + diphosphate. Its pathway is cofactor biosynthesis; molybdopterin biosynthesis. Functionally, catalyzes the conversion of (8S)-3',8-cyclo-7,8-dihydroguanosine 5'-triphosphate to cyclic pyranopterin monophosphate (cPMP). This chain is Cyclic pyranopterin monophosphate synthase, found in Xanthomonas oryzae pv. oryzae (strain MAFF 311018).